The chain runs to 176 residues: 3-hydroxyacyl-[acyl-carrier-protein] dehydratase FabZ (176 aa).

His54 is an active-site residue.

The protein belongs to the thioester dehydratase family. FabZ subfamily.

Its subcellular location is the cytoplasm. It catalyses the reaction a (3R)-hydroxyacyl-[ACP] = a (2E)-enoyl-[ACP] + H2O. Involved in unsaturated fatty acids biosynthesis. Catalyzes the dehydration of short chain beta-hydroxyacyl-ACPs and long chain saturated and unsaturated beta-hydroxyacyl-ACPs. In Yersinia pseudotuberculosis serotype O:1b (strain IP 31758), this protein is 3-hydroxyacyl-[acyl-carrier-protein] dehydratase FabZ.